The primary structure comprises 105 residues: MAAKVKKGDKVVVLTGRDKGRTGEVIQVMPKENRALVRGVNLVKRHQRQTQTQEGGIISKEAAIDLSNLAVADPKDGKPTRVGFRILEDGRKVRFAKRSGDLIDG.

It belongs to the universal ribosomal protein uL24 family. As to quaternary structure, part of the 50S ribosomal subunit.

Functionally, one of two assembly initiator proteins, it binds directly to the 5'-end of the 23S rRNA, where it nucleates assembly of the 50S subunit. In terms of biological role, one of the proteins that surrounds the polypeptide exit tunnel on the outside of the subunit. This chain is Large ribosomal subunit protein uL24, found in Methylobacterium sp. (strain 4-46).